The chain runs to 286 residues: Transmembrane protein 156 (286 aa).

The Cytoplasmic segment spans residues 1–4 (MTET). Residues 5 to 25 (AFLKLFVAIVITFILVLPEFF) form a helical membrane-spanning segment. The Extracellular portion of the chain corresponds to 26 to 214 (KTPKERTLEL…KSVTCSMKIT (189 aa)). Asn45, Asn54, Asn76, and Asn142 each carry an N-linked (GlcNAc...) asparagine glycan. The chain crosses the membrane as a helical span at residues 215–235 (WYVLVLFVFMLGIIFIIYKIL). At 236–286 (EEHRRVWRRQSHNYKSSSVLFRGHDSGKLSTLNVRVIPGYPWTIWTRDFDE) the chain is on the cytoplasmic side.

It is found in the membrane. This chain is Transmembrane protein 156 (Tmem156), found in Rattus norvegicus (Rat).